The following is a 666-amino-acid chain: Peptidase S41 family protein phomP1' (666 aa).

An N-terminal signal peptide occupies residues 1 to 27 (MSSFLVQTAVVRLFLLGVVFWFPFALS). Asn-70, Asn-214, and Asn-234 each carry an N-linked (GlcNAc...) asparagine glycan. A peptidase S41 domain region spans residues 303–504 (DVAVLQITSF…LLQAQGVRTV (202 aa)). N-linked (GlcNAc...) asparagine glycosylation is found at Asn-555 and Asn-612.

Belongs to the peptidase S41A family.

Its pathway is mycotoxin biosynthesis. Its function is as follows. Peptidase S41 family protein; part of the gene cluster that mediates the biosynthesis of the phomopsins, a group of hexapeptide mycotoxins which infects lupins and causes lupinosis disease in livestock. Within the pathway, phomP1 and phomP1' are probably involved in the processing of the phomA and phomA' precursors. The pathway starts with the processing of the precursor phomA by several endopeptidases including kexin proteases as well as the cluster-specific S41 family peptidase phomP1 and the oligopeptidase phomG to produce 10 identical copies of the hexapeptide Tyr-Val-Ile-Pro-Ile-Asp. After being excised from the precursor peptide, the core peptides are cyclized and modified post-translationally by enzymes encoded within the gene cluster. The timing and order of proteolysis of the phomA precursor and PTMs are still unknown. Two tyrosinase-like enzymes, phomQ1 and phomQ2, catalyze the chlorination and hydroxylation of Tyr, respectively. PhomYb, is proposed to be involved in the construction of the macrocyclic structure. The other 4 ustYa family proteins may be involved in PTMs that generate the unique structure of phomopsin A. PhomYa is required for the hydroxylation of C-beta of Tyr. PhomYc, phomYd, and phomYe are responsible for the biosynthesis of 2,3-dehydroisoleucine (dIle), 2,3-dehydroaspartic acid (dAsp), and 3,4-dehydroproline (dPro), respectively. While dIle formation by phomYc is indispensable for the installation of dAsp by phomYd, the order of the other PTMs have not been elucidated yet. Most of the biosynthetic enzymes likely have broad substrate specificity, and thus, there might be a metabolic grid from a precursor to phomopsin A. The enzyme(s) responsible for the biosynthesis of 3,4-dehydrovaline (dVal) have also not been identified yet. Finally, phomM acts as an S-adenosylmethionine-dependent alpha-N-methyltransferase that catalyzes two successive N-methylation reactions, converting N-desmethyl-phomopsin A to phomopsin A and phomopsin A further to an N,N-dimethylated congener called phomopsin E. The sequence is that of Peptidase S41 family protein phomP1' from Diaporthe leptostromiformis (Lupinosis disease fungus).